The primary structure comprises 145 residues: Cell wall teichoic acid glycosylation protein GtcA (145 aa).

The next 4 membrane-spanning stretches (helical) occupy residues isoleucine 21–leucine 41, isoleucine 45–alanine 65, phenylalanine 91–serine 111, and isoleucine 122–lysine 142.

The protein belongs to the GtrA family.

The protein resides in the cell membrane. Its function is as follows. Involved in the decoration of cell wall teichoic acid with galactose and glucose. This chain is Cell wall teichoic acid glycosylation protein GtcA (gtcA), found in Listeria monocytogenes.